A 109-amino-acid polypeptide reads, in one-letter code: Parvalbumin beta (109 aa).

EF-hand domains follow at residues 38 to 73 (KSKDQLTKVFGVIDRDKSGYIEEDELKKFLQNFDGK) and 77 to 109 (LTDKETAEFLKEGDTDGDGKIGVEEFVVLVTKG). Ca(2+)-binding residues include aspartate 51, aspartate 53, serine 55, tyrosine 57, glutamate 59, glutamate 62, aspartate 90, aspartate 92, aspartate 94, lysine 96, and glutamate 101.

Belongs to the parvalbumin family.

Its function is as follows. In muscle, parvalbumin is thought to be involved in relaxation after contraction. It binds two calcium ions. The protein is Parvalbumin beta of Boa constrictor (Boa).